The primary structure comprises 310 residues: Phosphoribosylaminoimidazole-succinocarboxamide synthase (310 aa).

The protein belongs to the SAICAR synthetase family.

The enzyme catalyses 5-amino-1-(5-phospho-D-ribosyl)imidazole-4-carboxylate + L-aspartate + ATP = (2S)-2-[5-amino-1-(5-phospho-beta-D-ribosyl)imidazole-4-carboxamido]succinate + ADP + phosphate + 2 H(+). It participates in purine metabolism; IMP biosynthesis via de novo pathway; 5-amino-1-(5-phospho-D-ribosyl)imidazole-4-carboxamide from 5-amino-1-(5-phospho-D-ribosyl)imidazole-4-carboxylate: step 1/2. This is Phosphoribosylaminoimidazole-succinocarboxamide synthase from Xanthomonas oryzae pv. oryzae (strain MAFF 311018).